A 382-amino-acid polypeptide reads, in one-letter code: Small ribosomal subunit protein mS35 (382 aa).

Over residues Gly-363–Gly-375 the composition is skewed to gly residues. The interval Gly-363 to Arg-382 is disordered.

The protein belongs to the mitochondrion-specific ribosomal protein mS35 family. Component of the mitochondrial small ribosomal subunit (mt-SSU). Mature N.crassa 74S mitochondrial ribosomes consist of a small (37S) and a large (54S) subunit. The 37S small subunit contains a 16S ribosomal RNA (16S mt-rRNA) and 32 different proteins. The 54S large subunit contains a 23S rRNA (23S mt-rRNA) and 42 different proteins.

Its subcellular location is the mitochondrion. Its function is as follows. Component of the mitochondrial ribosome (mitoribosome), a dedicated translation machinery responsible for the synthesis of mitochondrial genome-encoded proteins, including at least some of the essential transmembrane subunits of the mitochondrial respiratory chain. The mitoribosomes are attached to the mitochondrial inner membrane and translation products are cotranslationally integrated into the membrane. This is Small ribosomal subunit protein mS35 (rsm24) from Neurospora crassa (strain ATCC 24698 / 74-OR23-1A / CBS 708.71 / DSM 1257 / FGSC 987).